The primary structure comprises 218 residues: Ras-related protein R-Ras (218 aa).

Residues 1 to 30 (MSSGAASGTGRGRPRGGGPGPRDPPPGETH) form a disordered region. Positions 7–20 (SGTGRGRPRGGGPG) are enriched in gly residues. Residue 36–44 (GGGGVGKSA) participates in GTP binding. The short motif at 58–66 (YDPTIEDSY) is the Effector region element. Residues 83–87 (DTAGQ), 142–145 (NKAD), and 172–174 (SAK) contribute to the GTP site. Cysteine methyl ester is present on Cys215. A lipid anchor (S-geranylgeranyl cysteine) is attached at Cys215. Positions 216 to 218 (VLL) are cleaved as a propeptide — removed in mature form.

It belongs to the small GTPase superfamily. Ras family. As to quaternary structure, interacts with PLCE1. Interacts (active GTP-bound form preferentially) with RGS14. Interacts with OSBPL3. Interacts with ZDHHC19. In terms of processing, S-palmitoylated by ZDHHC19, leading to increased association with membranes and with rafts/caveolae as well as enhanced cell viability.

The protein localises to the cell membrane. The enzyme catalyses GTP + H2O = GDP + phosphate + H(+). Its function is as follows. GTP-binding protein with GTPase activity, likely involved in the regulation of MAPK signaling pathway and thereby controlling multiple cellular processes. Regulates the organization of the actin cytoskeleton. With OSPBL3, modulates integrin beta-1 (ITGB1) activity. The polypeptide is Ras-related protein R-Ras (Rras) (Rattus norvegicus (Rat)).